The sequence spans 274 residues: Tyrosinase (274 aa).

Residues His-38, His-54, His-63, His-190, His-194, and His-216 each coordinate Cu cation.

It belongs to the tyrosinase family. The cofactor is Cu(2+).

The enzyme catalyses 2 L-dopa + O2 = 2 L-dopaquinone + 2 H2O. It catalyses the reaction L-tyrosine + O2 = L-dopaquinone + H2O. This is a copper-containing oxidase that functions in the formation of pigments such as melanins and other polyphenolic compounds. This chain is Tyrosinase (melC2), found in Streptomyces glaucescens.